The chain runs to 493 residues: Probable cytochrome P450 CYP36A1 (493 aa).

Transmembrane regions (helical) follow at residues 1 to 21 (MLFAQLVILVIIVMLFLCRFA), 60 to 80 (GGIFTLWLPFPTIVICDYDML), and 290 to 310 (QLIVAIYDLYSAGMETIIIVL). C440 contacts heme.

It belongs to the cytochrome P450 family. Requires heme as cofactor.

Its subcellular location is the membrane. Cytochromes P450 are a group of heme-thiolate monooxygenases. They oxidize a variety of structurally unrelated compounds, including steroids, fatty acids, and xenobiotics. The polypeptide is Probable cytochrome P450 CYP36A1 (cyp-36A1) (Caenorhabditis elegans).